A 163-amino-acid chain; its full sequence is Putative pre-16S rRNA nuclease (163 aa).

This sequence belongs to the YqgF nuclease family.

It localises to the cytoplasm. Could be a nuclease involved in processing of the 5'-end of pre-16S rRNA. This is Putative pre-16S rRNA nuclease from Rhodopseudomonas palustris (strain BisA53).